The sequence spans 697 residues: Elongation factor G (697 aa).

A tr-type G domain is found at 8 to 282 (EDYRNIGIMA…AIVDYLPSPL (275 aa)). Residues 17–24 (AHIDAGKT), 81–85 (DTPGH), and 135–138 (NKMD) contribute to the GTP site.

It belongs to the TRAFAC class translation factor GTPase superfamily. Classic translation factor GTPase family. EF-G/EF-2 subfamily.

The protein resides in the cytoplasm. Catalyzes the GTP-dependent ribosomal translocation step during translation elongation. During this step, the ribosome changes from the pre-translocational (PRE) to the post-translocational (POST) state as the newly formed A-site-bound peptidyl-tRNA and P-site-bound deacylated tRNA move to the P and E sites, respectively. Catalyzes the coordinated movement of the two tRNA molecules, the mRNA and conformational changes in the ribosome. The sequence is that of Elongation factor G from Metamycoplasma arthritidis (strain 158L3-1) (Mycoplasma arthritidis).